Consider the following 398-residue polypeptide: Stearoyl-[acyl-carrier-protein] 9-desaturase, chloroplastic (398 aa).

Residues 1 to 34 (MALKLNPLASQPYNFPSSARPPISTFRSPKFLCL) constitute a chloroplast transit peptide. Glu-140, Glu-178, His-181, Glu-231, Glu-264, and His-267 together coordinate Fe cation.

It belongs to the fatty acid desaturase type 2 family. As to quaternary structure, homodimer. It depends on Fe(2+) as a cofactor.

It localises to the plastid. It is found in the chloroplast. The catalysed reaction is octadecanoyl-[ACP] + 2 reduced [2Fe-2S]-[ferredoxin] + O2 + 2 H(+) = (9Z)-octadecenoyl-[ACP] + 2 oxidized [2Fe-2S]-[ferredoxin] + 2 H2O. Its pathway is lipid metabolism; fatty acid metabolism. Functionally, converts stearoyl-ACP to oleoyl-ACP by introduction of a cis double bond between carbons 9 and 10 of the acyl chain. This Brassica napus (Rape) protein is Stearoyl-[acyl-carrier-protein] 9-desaturase, chloroplastic.